Here is a 166-residue protein sequence, read N- to C-terminus: 2-amino-4-hydroxy-6-hydroxymethyldihydropteridine pyrophosphokinase (166 aa).

Belongs to the HPPK family.

The enzyme catalyses 6-hydroxymethyl-7,8-dihydropterin + ATP = (7,8-dihydropterin-6-yl)methyl diphosphate + AMP + H(+). It participates in cofactor biosynthesis; tetrahydrofolate biosynthesis; 2-amino-4-hydroxy-6-hydroxymethyl-7,8-dihydropteridine diphosphate from 7,8-dihydroneopterin triphosphate: step 4/4. In terms of biological role, catalyzes the transfer of pyrophosphate from adenosine triphosphate (ATP) to 6-hydroxymethyl-7,8-dihydropterin, an enzymatic step in folate biosynthesis pathway. This Streptococcus pyogenes serotype M1 protein is 2-amino-4-hydroxy-6-hydroxymethyldihydropteridine pyrophosphokinase (folK).